Consider the following 316-residue polypeptide: Ornithine carbamoyltransferase (316 aa).

Carbamoyl phosphate is bound by residues 57–60 (STRT), glutamine 84, arginine 108, and 135–138 (HPCQ). L-ornithine contacts are provided by residues asparagine 166, aspartate 230, and 234–235 (SM). Residues 269-270 (CL) and arginine 297 contribute to the carbamoyl phosphate site.

This sequence belongs to the aspartate/ornithine carbamoyltransferase superfamily. OTCase family.

The protein resides in the cytoplasm. The enzyme catalyses carbamoyl phosphate + L-ornithine = L-citrulline + phosphate + H(+). It participates in amino-acid degradation; L-arginine degradation via ADI pathway; carbamoyl phosphate from L-arginine: step 2/2. Its function is as follows. Reversibly catalyzes the transfer of the carbamoyl group from carbamoyl phosphate (CP) to the N(epsilon) atom of ornithine (ORN) to produce L-citrulline. The sequence is that of Ornithine carbamoyltransferase from Bacillus anthracis (strain CDC 684 / NRRL 3495).